The following is a 135-amino-acid chain: Retinol-binding protein 5 (135 aa).

The protein belongs to the calycin superfamily. Fatty-acid binding protein (FABP) family. Kidney.

The protein localises to the cytoplasm. Its function is as follows. Intracellular transport of retinol. The protein is Retinol-binding protein 5 (RBP5) of Bos taurus (Bovine).